The following is a 364-amino-acid chain: tRNA 2-selenouridine synthase (364 aa).

In terms of domain architecture, Rhodanese spans 14–137 (LIADTPIIDV…LRQTAIQATI (124 aa)). Catalysis depends on Cys97, which acts as the S-selanylcysteine intermediate.

It belongs to the SelU family. Monomer.

It catalyses the reaction 5-methylaminomethyl-2-thiouridine(34) in tRNA + selenophosphate + (2E)-geranyl diphosphate + H2O + H(+) = 5-methylaminomethyl-2-selenouridine(34) in tRNA + (2E)-thiogeraniol + phosphate + diphosphate. The enzyme catalyses 5-methylaminomethyl-2-thiouridine(34) in tRNA + (2E)-geranyl diphosphate = 5-methylaminomethyl-S-(2E)-geranyl-thiouridine(34) in tRNA + diphosphate. It carries out the reaction 5-methylaminomethyl-S-(2E)-geranyl-thiouridine(34) in tRNA + selenophosphate + H(+) = 5-methylaminomethyl-2-(Se-phospho)selenouridine(34) in tRNA + (2E)-thiogeraniol. The catalysed reaction is 5-methylaminomethyl-2-(Se-phospho)selenouridine(34) in tRNA + H2O = 5-methylaminomethyl-2-selenouridine(34) in tRNA + phosphate. In terms of biological role, involved in the post-transcriptional modification of the uridine at the wobble position (U34) of tRNA(Lys), tRNA(Glu) and tRNA(Gln). Catalyzes the conversion of 2-thiouridine (S2U-RNA) to 2-selenouridine (Se2U-RNA). Acts in a two-step process involving geranylation of 2-thiouridine (S2U) to S-geranyl-2-thiouridine (geS2U) and subsequent selenation of the latter derivative to 2-selenouridine (Se2U) in the tRNA chain. This chain is tRNA 2-selenouridine synthase, found in Shigella boydii serotype 18 (strain CDC 3083-94 / BS512).